The following is a 251-amino-acid chain: Diphthine synthase (251 aa).

S-adenosyl-L-methionine contacts are provided by residues Leu9, Asp85, Val88, 113 to 114 (SI), Leu165, Ala202, and His227.

The protein belongs to the diphthine synthase family. As to quaternary structure, homodimer.

The catalysed reaction is 2-[(3S)-amino-3-carboxypropyl]-L-histidyl-[translation elongation factor 2] + 3 S-adenosyl-L-methionine = diphthine-[translation elongation factor 2] + 3 S-adenosyl-L-homocysteine + 3 H(+). Its pathway is protein modification; peptidyl-diphthamide biosynthesis. Its function is as follows. S-adenosyl-L-methionine-dependent methyltransferase that catalyzes the trimethylation of the amino group of the modified target histidine residue in translation elongation factor 2 (EF-2), to form an intermediate called diphthine. The three successive methylation reactions represent the second step of diphthamide biosynthesis. The sequence is that of Diphthine synthase from Methanosphaerula palustris (strain ATCC BAA-1556 / DSM 19958 / E1-9c).